We begin with the raw amino-acid sequence, 364 residues long: MGRPLLLIAAGGTGGHMFPAQALAEAMVRRGWRVKLSTDARGARYAGGFPHVVEIEEVSSATFARGGPLAKALVPLRIAGGVASAVAGFLRDRPSVVVGFGGYPSIPALSAAVALRLPRMIHEQNGVLGRVNRLFAPRVQAVCCGTWPTDLPEGVEGYYTGNPVRAAVLERAAAPYIVPGDYPMSLVVIGGSQGARVLSDVVPEAIARLPEQILANLRIAHQAREEDVARVTEAYDRAGLLAEVKTFFTDIPRRLSEAQLVISRSGASSVADISIIGRPAILVPFAAATADHQTANARGLVEAEAAILIPESALDPAALSEHIAAVLSQPDAARQMARNALAHGRPDATERLVEVVEHLARKET.

UDP-N-acetyl-alpha-D-glucosamine-binding positions include 13–15 (TGG), N125, R165, S192, and Q293.

It belongs to the glycosyltransferase 28 family. MurG subfamily.

It localises to the cell inner membrane. It carries out the reaction di-trans,octa-cis-undecaprenyl diphospho-N-acetyl-alpha-D-muramoyl-L-alanyl-D-glutamyl-meso-2,6-diaminopimeloyl-D-alanyl-D-alanine + UDP-N-acetyl-alpha-D-glucosamine = di-trans,octa-cis-undecaprenyl diphospho-[N-acetyl-alpha-D-glucosaminyl-(1-&gt;4)]-N-acetyl-alpha-D-muramoyl-L-alanyl-D-glutamyl-meso-2,6-diaminopimeloyl-D-alanyl-D-alanine + UDP + H(+). It functions in the pathway cell wall biogenesis; peptidoglycan biosynthesis. Functionally, cell wall formation. Catalyzes the transfer of a GlcNAc subunit on undecaprenyl-pyrophosphoryl-MurNAc-pentapeptide (lipid intermediate I) to form undecaprenyl-pyrophosphoryl-MurNAc-(pentapeptide)GlcNAc (lipid intermediate II). The chain is UDP-N-acetylglucosamine--N-acetylmuramyl-(pentapeptide) pyrophosphoryl-undecaprenol N-acetylglucosamine transferase from Cereibacter sphaeroides (strain ATCC 17029 / ATH 2.4.9) (Rhodobacter sphaeroides).